The sequence spans 215 residues: GTP-binding nuclear protein Ran (215 aa).

Positions 6-170 constitute a Small GTPase Ran-type domain; it reads DIPTFKLVLV…LWLVRKLLGD (165 aa). GTP is bound by residues 17-24, 35-41, glycine 67, 121-124, and 149-151; these read DGGTGKTT, EKKYVAT, NFVD, and SAK. Residues 36–44 are switch-I; sequence KKYVATLGV. Residues 67–83 form a switch-II region; it reads GQEKFGGLRDGYYIQGQ. The interval 210–215 is interaction with RANBP1; that stretch reads DDDEDL.

It belongs to the small GTPase superfamily. Ran family. Monomer. Interacts with RANGAP1, which promotes RAN-mediated GTP hydrolysis. Interacts with KPNB1. Interaction with KPNB1 inhibits RANGAP1-mediated stimulation of GTPase activity. Interacts with RCC1 which promotes the exchange of RAN-bound GDP by GTP. Interaction with KPNB1 inhibits RCC1-mediated exchange of RAN-bound GDP by GTP. Interacts (GTP-bound form) with TNPO1; the interaction is direct. Interacts with KPNB1 and with TNPO1; both inhibit RAN GTPase activity. Interacts (via C-terminus) with RANBP1, which alleviates the inhibition of RAN GTPase activity. Interacts with RANGRF, which promotes the release of bound guanine nucleotide. RANGRF and RCC1 compete for an overlapping binding site on RAN. Identified in a complex with KPNA2 and CSE1L; interaction with RANBP1 mediates dissociation of RAN from this complex. Interaction with both RANBP1 and KPNA2 promotes dissociation of the complex between RAN and KPNB1. Identified in a complex composed of RAN, RANGAP1 and RANBP1. Identified in a complex that contains TNPO1, RAN and RANBP1. Identified in a nuclear export complex with XPO1. Interaction with RANBP1 or RANBP2 induces a conformation change in the complex formed by XPO1 and RAN that triggers the release of the nuclear export signal of cargo proteins. Component of a nuclear export receptor complex composed of KPNB1, RAN, SNUPN and XPO1. Mg(2+) serves as cofactor.

The protein resides in the nucleus. It localises to the nucleus envelope. It is found in the cytoplasm. The protein localises to the cytosol. GTPase involved in nucleocytoplasmic transport, participating both to the import and the export from the nucleus of proteins and RNAs. Switches between a cytoplasmic GDP- and a nuclear GTP-bound state by nucleotide exchange and GTP hydrolysis. Nuclear import receptors such as importin beta bind their substrates only in the absence of GTP-bound RAN and release them upon direct interaction with GTP-bound RAN, while export receptors behave in the opposite way. Thereby, RAN controls cargo loading and release by transport receptors in the proper compartment and ensures the directionality of the transport. Interaction with RANBP1 induces a conformation change in the complex formed by XPO1 and RAN that triggers the release of the nuclear export signal of cargo proteins. RAN (GTP-bound form) triggers microtubule assembly at mitotic chromosomes and is required for normal mitotic spindle assembly and chromosome segregation. Required for normal progress through mitosis. The polypeptide is GTP-binding nuclear protein Ran (ran-1) (Onchocerca volvulus).